The primary structure comprises 250 residues: 1-(5-phosphoribosyl)-5-[(5-phosphoribosylamino)methylideneamino] imidazole-4-carboxamide isomerase (250 aa).

Asp12 (proton acceptor) is an active-site residue. The active-site Proton donor is Asp134.

The protein belongs to the HisA/HisF family.

The protein localises to the cytoplasm. The enzyme catalyses 1-(5-phospho-beta-D-ribosyl)-5-[(5-phospho-beta-D-ribosylamino)methylideneamino]imidazole-4-carboxamide = 5-[(5-phospho-1-deoxy-D-ribulos-1-ylimino)methylamino]-1-(5-phospho-beta-D-ribosyl)imidazole-4-carboxamide. It participates in amino-acid biosynthesis; L-histidine biosynthesis; L-histidine from 5-phospho-alpha-D-ribose 1-diphosphate: step 4/9. The sequence is that of 1-(5-phosphoribosyl)-5-[(5-phosphoribosylamino)methylideneamino] imidazole-4-carboxamide isomerase from Actinobacillus pleuropneumoniae serotype 7 (strain AP76).